The sequence spans 604 residues: Aspartate--tRNA(Asp/Asn) ligase (604 aa).

E175 lines the L-aspartate pocket. Positions 199 to 202 are aspartate; the sequence is QQFK. The L-aspartate site is built by R221 and H456. Position 221–223 (221–223) interacts with ATP; the sequence is RDE. E496 contacts ATP. Residue R503 coordinates L-aspartate. An ATP-binding site is contributed by 548 to 551; sequence GVDR.

This sequence belongs to the class-II aminoacyl-tRNA synthetase family. Type 1 subfamily. In terms of assembly, homodimer.

The protein resides in the cytoplasm. It carries out the reaction tRNA(Asx) + L-aspartate + ATP = L-aspartyl-tRNA(Asx) + AMP + diphosphate. In terms of biological role, aspartyl-tRNA synthetase with relaxed tRNA specificity since it is able to aspartylate not only its cognate tRNA(Asp) but also tRNA(Asn). Reaction proceeds in two steps: L-aspartate is first activated by ATP to form Asp-AMP and then transferred to the acceptor end of tRNA(Asp/Asn). The protein is Aspartate--tRNA(Asp/Asn) ligase of Methylobacterium nodulans (strain LMG 21967 / CNCM I-2342 / ORS 2060).